The primary structure comprises 1337 residues: DNA mismatch repair protein Msh6 (1337 aa).

In terms of domain architecture, PWWP spans 68-130 (PGDLVWAKME…IKYLRPYKGS (63 aa)). Positions 170 to 310 (AVCSEPSDTE…SEAPKRAAPV (141 aa)) are disordered. The span at 176–187 (SDTEEAEEEEME) shows a compositional bias: acidic residues. The segment covering 226–248 (VLDSDSDRDGSDVEFKPDVKEAS) has biased composition (basic and acidic residues). A compositionally biased stretch (acidic residues) spans 257 to 272 (DENEATDVETDEESIE). Residues 279–292 (PSKRKRGNVSKPSK) show a composition bias toward basic residues. Positions 294-305 (SSLENEHSEAPK) are enriched in basic and acidic residues. ATP is bound at residue 1111 to 1118 (GPNMGGKS).

Belongs to the DNA mismatch repair MutS family.

Its subcellular location is the nucleus. Functionally, component of the post-replicative DNA mismatch repair system (MMR). Involved in B cell growth by positively regulating B cell proliferation and controlling replication efficiency. Controls cell cycle to prevent re-replication and defects in DNA damage-induced G2 checkpoint. Doesn't seem to counteract or control the immunoglobulin gene conversion (Ig GC) and to contribute to guanine/uracil mismatch repair. The sequence is that of DNA mismatch repair protein Msh6 from Gallus gallus (Chicken).